Reading from the N-terminus, the 250-residue chain is Probable transcriptional regulatory protein Paes_0496 (250 aa).

Belongs to the TACO1 family.

Its subcellular location is the cytoplasm. This Prosthecochloris aestuarii (strain DSM 271 / SK 413) protein is Probable transcriptional regulatory protein Paes_0496.